The chain runs to 511 residues: Mannosyl-oligosaccharide alpha-1,2-mannosidase (511 aa).

Positions 1–35 (MRLPVSFPLTVLSLLGSTIAHPYGETEAVLRSEPK) are cleaved as a signal peptide. Asn-182 carries an N-linked (GlcNAc...) asparagine glycan. Cys-332 and Cys-361 are disulfide-bonded. The N-linked (GlcNAc...) asparagine glycan is linked to Asn-366. Residue Asp-375 is the Proton donor of the active site. Asn-438 is a glycosylation site (N-linked (GlcNAc...) asparagine). Thr-501 provides a ligand contact to Ca(2+).

This sequence belongs to the glycosyl hydrolase 47 family. As to quaternary structure, homodimer. It depends on Ca(2+) as a cofactor.

The protein localises to the secreted. It carries out the reaction N(4)-(alpha-D-Man-(1-&gt;2)-alpha-D-Man-(1-&gt;2)-alpha-D-Man-(1-&gt;3)-[alpha-D-Man-(1-&gt;2)-alpha-D-Man-(1-&gt;3)-[alpha-D-Man-(1-&gt;2)-alpha-D-Man-(1-&gt;6)]-alpha-D-Man-(1-&gt;6)]-beta-D-Man-(1-&gt;4)-beta-D-GlcNAc-(1-&gt;4)-beta-D-GlcNAc)-L-asparaginyl-[protein] (N-glucan mannose isomer 9A1,2,3B1,2,3) + 4 H2O = N(4)-(alpha-D-Man-(1-&gt;3)-[alpha-D-Man-(1-&gt;3)-[alpha-D-Man-(1-&gt;6)]-alpha-D-Man-(1-&gt;6)]-beta-D-Man-(1-&gt;4)-beta-D-GlcNAc-(1-&gt;4)-beta-D-GlcNAc)-L-asparaginyl-[protein] (N-glucan mannose isomer 5A1,2) + 4 beta-D-mannose. The catalysed reaction is N(4)-(alpha-D-Man-(1-&gt;2)-alpha-D-Man-(1-&gt;2)-alpha-D-Man-(1-&gt;3)-[alpha-D-Man-(1-&gt;3)-[alpha-D-Man-(1-&gt;2)-alpha-D-Man-(1-&gt;6)]-alpha-D-Man-(1-&gt;6)]-beta-D-Man-(1-&gt;4)-beta-D-GlcNAc-(1-&gt;4)-beta-D-GlcNAc)-L-asparaginyl-[protein] (N-glucan mannose isomer 8A1,2,3B1,3) + 3 H2O = N(4)-(alpha-D-Man-(1-&gt;3)-[alpha-D-Man-(1-&gt;3)-[alpha-D-Man-(1-&gt;6)]-alpha-D-Man-(1-&gt;6)]-beta-D-Man-(1-&gt;4)-beta-D-GlcNAc-(1-&gt;4)-beta-D-GlcNAc)-L-asparaginyl-[protein] (N-glucan mannose isomer 5A1,2) + 3 beta-D-mannose. It participates in protein modification; protein glycosylation. In terms of biological role, involved in the maturation of Asn-linked oligosaccharides. Progressively trim alpha-1,2-linked mannose residues from Man(9)GlcNAc(2) to produce Man(5)GlcNAc(2). This Penicillium citrinum protein is Mannosyl-oligosaccharide alpha-1,2-mannosidase (MSDC).